Reading from the N-terminus, the 404-residue chain is Photosynthetic reaction center cytochrome c subunit (404 aa).

Positions 1-22 (MSPAQQLTLPAVIVVASVMLLG) are cleaved as a signal peptide. The N-palmitoyl cysteine moiety is linked to residue Cys-23. The S-diacylglycerol cysteine moiety is linked to residue Cys-23. The heme site is built by Met-94, Cys-107, Cys-110, His-111, Met-130, His-144, Cys-152, Cys-155, His-156, Met-236, Cys-247, Cys-250, His-251, Cys-307, Cys-310, and His-311. A disordered region spans residues 346-404 (ASEAAPAAATEAAPEAPAQEVPAAEAVPAAAEPGAAEAAGSVEPAPVEEVAPAPAAQRL).

In terms of assembly, component of the photosynthetic reaction center composed of protein subunits L (PufL), M (PufM), H (PuhA) and cytochrome C (PufC). The reaction center interacts with light-harvesting antenna complex LH1. Binds 4 heme groups per subunit.

It localises to the cellular chromatophore membrane. The reaction center of purple bacteria contains a tightly bound cytochrome molecule which re-reduces the photo oxidized primary electron donor. The sequence is that of Photosynthetic reaction center cytochrome c subunit from Thermochromatium tepidum (Chromatium tepidum).